The primary structure comprises 397 residues: 4-hydroxyphenylpyruvate dioxygenase (397 aa).

VOC domains are found at residues 18-149 (NFHH…FVEY) and 181-339 (FIDH…IFTK). Residues histidine 184, histidine 267, and glutamate 350 each contribute to the Fe cation site.

The protein belongs to the 4HPPD family. As to quaternary structure, homodimer. Requires Fe cation as cofactor.

It is found in the cytoplasm. The protein localises to the endoplasmic reticulum membrane. It localises to the golgi apparatus membrane. The catalysed reaction is 3-(4-hydroxyphenyl)pyruvate + O2 = homogentisate + CO2. It functions in the pathway amino-acid degradation; L-phenylalanine degradation; acetoacetate and fumarate from L-phenylalanine: step 3/6. In terms of biological role, catalyzes the conversion of 4-hydroxyphenylpyruvic acid to homogentisic acid, one of the steps in tyrosine catabolism. The sequence is that of 4-hydroxyphenylpyruvate dioxygenase (hpd) from Danio rerio (Zebrafish).